Consider the following 166-residue polypeptide: Probable histone deacetylase complex subunit SAP18 (166 aa).

The interval 143–166 (GRRFNNREQGDRFDHRQRQRSPIR) is disordered. The span at 147–158 (NNREQGDRFDHR) shows a compositional bias: basic and acidic residues.

The protein belongs to the SAP18 family. As to quaternary structure, interacts with SIN3 and histone deacetylase.

Its function is as follows. Acts in transcription repression. Involved in the tethering of the SIN3 complex to core histone proteins. This chain is Probable histone deacetylase complex subunit SAP18, found in Caenorhabditis elegans.